Here is a 343-residue protein sequence, read N- to C-terminus: Anthranilate phosphoribosyltransferase (343 aa).

5-phospho-alpha-D-ribose 1-diphosphate is bound by residues glycine 84, 87 to 88, threonine 92, 94 to 97, 112 to 120, and serine 124; these read GD, NIST, and KHGNRGVSS. Glycine 84 lines the anthranilate pocket. Residue serine 96 coordinates Mg(2+). Asparagine 115 contributes to the anthranilate binding site. An anthranilate-binding site is contributed by arginine 170. Positions 229 and 230 each coordinate Mg(2+).

The protein belongs to the anthranilate phosphoribosyltransferase family. Homodimer. The cofactor is Mg(2+).

It carries out the reaction N-(5-phospho-beta-D-ribosyl)anthranilate + diphosphate = 5-phospho-alpha-D-ribose 1-diphosphate + anthranilate. The protein operates within amino-acid biosynthesis; L-tryptophan biosynthesis; L-tryptophan from chorismate: step 2/5. Catalyzes the transfer of the phosphoribosyl group of 5-phosphorylribose-1-pyrophosphate (PRPP) to anthranilate to yield N-(5'-phosphoribosyl)-anthranilate (PRA). In Burkholderia orbicola (strain AU 1054), this protein is Anthranilate phosphoribosyltransferase.